Consider the following 576-residue polypeptide: Proline--tRNA ligase (576 aa).

This sequence belongs to the class-II aminoacyl-tRNA synthetase family. ProS type 1 subfamily. In terms of assembly, homodimer.

It localises to the cytoplasm. The catalysed reaction is tRNA(Pro) + L-proline + ATP = L-prolyl-tRNA(Pro) + AMP + diphosphate. Catalyzes the attachment of proline to tRNA(Pro) in a two-step reaction: proline is first activated by ATP to form Pro-AMP and then transferred to the acceptor end of tRNA(Pro). As ProRS can inadvertently accommodate and process non-cognate amino acids such as alanine and cysteine, to avoid such errors it has two additional distinct editing activities against alanine. One activity is designated as 'pretransfer' editing and involves the tRNA(Pro)-independent hydrolysis of activated Ala-AMP. The other activity is designated 'posttransfer' editing and involves deacylation of mischarged Ala-tRNA(Pro). The misacylated Cys-tRNA(Pro) is not edited by ProRS. The chain is Proline--tRNA ligase from Leptospira borgpetersenii serovar Hardjo-bovis (strain L550).